A 434-amino-acid chain; its full sequence is Sulfide-quinone reductase (434 aa).

FAD contacts are provided by residues Gly-8–Gly-12, Ser-34–Ala-35, and Ser-77–Ala-78. The Cysteine persulfide intermediate role is filled by Cys-160. Ile-302 and Gly-322 together coordinate FAD. Cys-356 (cysteine persulfide intermediate) is an active-site residue. Residue Lys-391 coordinates FAD.

The protein belongs to the SQRD family. Homodimer. Requires FAD as cofactor.

It is found in the membrane. The enzyme catalyses n a quinone + n hydrogen sulfide + n H(+) = polysulfur(n-2) + n a quinol. Its function is as follows. Catalyzes the oxidation of hydrogen sulfide, with the help of a quinone. Consecutive reaction cycles lead to the accumulation of a polysulfide product on the active site Cys residues; these products are released when they exceed a critical length, typically as cyclooctasulfur. This Acidithiobacillus ferrooxidans (strain ATCC 23270 / DSM 14882 / CIP 104768 / NCIMB 8455) (Ferrobacillus ferrooxidans (strain ATCC 23270)) protein is Sulfide-quinone reductase.